A 356-amino-acid chain; its full sequence is 3-dehydroquinate synthase (356 aa).

Residues 71 to 76 (EGEASK), 105 to 109 (GVTGD), 129 to 130 (TS), lysine 142, and lysine 151 contribute to the NAD(+) site. Zn(2+) is bound by residues glutamate 184, histidine 247, and histidine 264.

This sequence belongs to the sugar phosphate cyclases superfamily. Dehydroquinate synthase family. Requires Co(2+) as cofactor. It depends on Zn(2+) as a cofactor. NAD(+) is required as a cofactor.

It localises to the cytoplasm. It carries out the reaction 7-phospho-2-dehydro-3-deoxy-D-arabino-heptonate = 3-dehydroquinate + phosphate. Its pathway is metabolic intermediate biosynthesis; chorismate biosynthesis; chorismate from D-erythrose 4-phosphate and phosphoenolpyruvate: step 2/7. In terms of biological role, catalyzes the conversion of 3-deoxy-D-arabino-heptulosonate 7-phosphate (DAHP) to dehydroquinate (DHQ). This Lactococcus lactis subsp. cremoris (strain MG1363) protein is 3-dehydroquinate synthase.